The following is a 228-amino-acid chain: UPF0758 protein SH1266 (228 aa).

The MPN domain occupies 102–224; sequence KITSPSDVSN…YASLVEEGYF (123 aa). Zn(2+) contacts are provided by H173, H175, and D186. Positions 173–186 match the JAMM motif motif; sequence HNHPSGDVTPSKED.

The protein belongs to the UPF0758 family.

The protein is UPF0758 protein SH1266 of Staphylococcus haemolyticus (strain JCSC1435).